A 329-amino-acid polypeptide reads, in one-letter code: Malate dehydrogenase (329 aa).

Gly-12–Gly-18 lines the NAD(+) pocket. Residues Arg-93 and Arg-99 each coordinate substrate. NAD(+) is bound by residues Asn-106, Gln-113, and Thr-130–Asn-132. Residues Asn-132 and Arg-163 each contribute to the substrate site. His-188 functions as the Proton acceptor in the catalytic mechanism.

It belongs to the LDH/MDH superfamily. MDH type 2 family.

It catalyses the reaction (S)-malate + NAD(+) = oxaloacetate + NADH + H(+). Functionally, catalyzes the reversible oxidation of malate to oxaloacetate. The polypeptide is Malate dehydrogenase (Mycobacterium bovis (strain ATCC BAA-935 / AF2122/97)).